A 238-amino-acid polypeptide reads, in one-letter code: Female-specific protein 800 (238 aa).

The span at 35–50 (YSYHHTYNNNNQGNYQ) shows a compositional bias: low complexity. 2 disordered regions span residues 35–112 (YSYH…KGGS) and 166–204 (NKRK…SKSP). The span at 97 to 106 (RNDQIQSRGN) shows a compositional bias: polar residues. Positions 171–187 (TKSEKNGRYIKKDHMNN) are enriched in basic and acidic residues.

Functionally, FS800 is likely to have some function in the production or maintenance of the schistosome egg. The protein is Female-specific protein 800 of Schistosoma mansoni (Blood fluke).